Here is a 141-residue protein sequence, read N- to C-terminus: Large ribosomal subunit protein uL11 (141 aa).

It belongs to the universal ribosomal protein uL11 family. Part of the ribosomal stalk of the 50S ribosomal subunit. Interacts with L10 and the large rRNA to form the base of the stalk. L10 forms an elongated spine to which L12 dimers bind in a sequential fashion forming a multimeric L10(L12)X complex. In terms of processing, one or more lysine residues are methylated.

Its function is as follows. Forms part of the ribosomal stalk which helps the ribosome interact with GTP-bound translation factors. The polypeptide is Large ribosomal subunit protein uL11 (Clostridium botulinum (strain Kyoto / Type A2)).